Reading from the N-terminus, the 209-residue chain is PITH domain-containing protein 1 (209 aa).

The 173-residue stretch at 18–190 folds into the PITH domain; sequence SDGPERGLEY…EVTICNYEAA (173 aa).

The protein belongs to the PITHD1 family.

It localises to the cytoplasm. In terms of biological role, may play a role in promoting megakaryocyte differentiation by up-regulating RUNX1 expression. The sequence is that of PITH domain-containing protein 1 (pithd1) from Xenopus laevis (African clawed frog).